We begin with the raw amino-acid sequence, 172 residues long: S-ribosylhomocysteine lyase (172 aa).

Fe cation contacts are provided by H54, H58, and C128.

This sequence belongs to the LuxS family. Homodimer. Fe cation is required as a cofactor.

The enzyme catalyses S-(5-deoxy-D-ribos-5-yl)-L-homocysteine = (S)-4,5-dihydroxypentane-2,3-dione + L-homocysteine. Involved in the synthesis of autoinducer 2 (AI-2) which is secreted by bacteria and is used to communicate both the cell density and the metabolic potential of the environment. The regulation of gene expression in response to changes in cell density is called quorum sensing. Catalyzes the transformation of S-ribosylhomocysteine (RHC) to homocysteine (HC) and 4,5-dihydroxy-2,3-pentadione (DPD). The chain is S-ribosylhomocysteine lyase from Vibrio atlanticus (strain LGP32) (Vibrio splendidus (strain Mel32)).